The chain runs to 848 residues: Beta-galactosidase 13 (848 aa).

Positions 1–27 are cleaved as a signal peptide; sequence MKIHSSDHSWLLLAVLVILLSFSGALS. An N-linked (GlcNAc...) asparagine glycan is attached at N107. E200 serves as the catalytic Proton donor. E271 (nucleophile) is an active-site residue. 7 N-linked (GlcNAc...) asparagine glycosylation sites follow: N272, N303, N376, N398, N782, N787, and N817. The 90-residue stretch at 754–843 folds into the SUEL-type lectin domain; the sequence is DDVHLTANLK…KKLAVQVKCG (90 aa).

It belongs to the glycosyl hydrolase 35 family. In terms of tissue distribution, ubiquitous, with higher expression levels in roots, flowers and siliques.

It localises to the secreted. The protein localises to the extracellular space. Its subcellular location is the apoplast. The catalysed reaction is Hydrolysis of terminal non-reducing beta-D-galactose residues in beta-D-galactosides.. The polypeptide is Beta-galactosidase 13 (BGAL13) (Arabidopsis thaliana (Mouse-ear cress)).